A 379-amino-acid chain; its full sequence is Cobalt-precorrin-5B C(1)-methyltransferase (379 aa).

The protein belongs to the CbiD family.

The catalysed reaction is Co-precorrin-5B + S-adenosyl-L-methionine = Co-precorrin-6A + S-adenosyl-L-homocysteine. The protein operates within cofactor biosynthesis; adenosylcobalamin biosynthesis; cob(II)yrinate a,c-diamide from sirohydrochlorin (anaerobic route): step 6/10. Catalyzes the methylation of C-1 in cobalt-precorrin-5B to form cobalt-precorrin-6A. The protein is Cobalt-precorrin-5B C(1)-methyltransferase of Salmonella schwarzengrund (strain CVM19633).